Consider the following 652-residue polypeptide: ATP-dependent zinc metalloprotease FtsH (652 aa).

Residues 1–11 (MKKQNNGLIKN) are Cytoplasmic-facing. The helical transmembrane segment at 12 to 32 (PFLWLLFIFFLVTGFQYFYSG) threads the bilayer. Residues 33–131 (NNSGGSQQIN…EVTVKHESSS (99 aa)) lie on the Extracellular side of the membrane. A helical membrane pass occupies residues 132–152 (GIWINLLVSIVPFGILFFFLF). Residues 153–652 (SMMGNMGGGN…EVKSKMNDEK (500 aa)) lie on the Cytoplasmic side of the membrane. 227–234 (GPPGTGKT) lines the ATP pocket. His-449 provides a ligand contact to Zn(2+). Glu-450 is a catalytic residue. Residues His-453 and Asp-525 each contribute to the Zn(2+) site. Residues 628-652 (MPEAVEEESHALSYDEVKSKMNDEK) are disordered. Positions 634–652 (EESHALSYDEVKSKMNDEK) are enriched in basic and acidic residues.

The protein in the central section; belongs to the AAA ATPase family. This sequence in the C-terminal section; belongs to the peptidase M41 family. Homohexamer. Requires Zn(2+) as cofactor.

Its subcellular location is the cell membrane. Functionally, acts as a processive, ATP-dependent zinc metallopeptidase for both cytoplasmic and membrane proteins. Plays a role in the quality control of integral membrane proteins. The sequence is that of ATP-dependent zinc metalloprotease FtsH from Streptococcus pneumoniae serotype 4 (strain ATCC BAA-334 / TIGR4).